The chain runs to 420 residues: L-cysteine:1D-myo-inositol 2-amino-2-deoxy-alpha-D-glucopyranoside ligase (420 aa).

Cysteine 43 serves as a coordination point for Zn(2+). Residues cysteine 43 to threonine 46, threonine 58, and asparagine 81 to threonine 83 each bind L-cysteinyl-5'-AMP. The 'HIGH' region signature appears at isoleucine 45–histidine 55. Residues glutamate 187–proline 192 carry the 'ERGGDP' region motif. Position 227 (tryptophan 227) interacts with L-cysteinyl-5'-AMP. A Zn(2+)-binding site is contributed by cysteine 231. Glycine 249–aspartate 251 contacts L-cysteinyl-5'-AMP. Zn(2+) is bound at residue histidine 256. Residue isoleucine 289 participates in L-cysteinyl-5'-AMP binding. The 'KMSKS' region signature appears at lysine 295–serine 299.

This sequence belongs to the class-I aminoacyl-tRNA synthetase family. MshC subfamily. Monomer. It depends on Zn(2+) as a cofactor.

The enzyme catalyses 1D-myo-inositol 2-amino-2-deoxy-alpha-D-glucopyranoside + L-cysteine + ATP = 1D-myo-inositol 2-(L-cysteinylamino)-2-deoxy-alpha-D-glucopyranoside + AMP + diphosphate + H(+). Its function is as follows. Catalyzes the ATP-dependent condensation of GlcN-Ins and L-cysteine to form L-Cys-GlcN-Ins. The protein is L-cysteine:1D-myo-inositol 2-amino-2-deoxy-alpha-D-glucopyranoside ligase of Segniliparus rotundus (strain ATCC BAA-972 / CDC 1076 / CIP 108378 / DSM 44985 / JCM 13578).